Reading from the N-terminus, the 258-residue chain is RBPJ-interacting and tubulin-associated protein 1 (258 aa).

3 disordered regions span residues 28-86, 132-182, and 195-258; these read FGSP…PRKK, TPPA…APRS, and AVPS…PPWK. Residues 71-81 are compositionally biased toward polar residues; it reads SPSSRGSTPNL. Residues 81-97 carry the Nuclear localization signal motif; that stretch reads LTPRKKNKYRLIGHTPS. The tract at residues 117-145 is interaction with RBPJ/RBPSUH; that stretch reads RTAVEDAAKLRTLFWTPPATPRGSHSPRP. The tract at residues 145–258 is interaction with tubulin; the sequence is PRETPLRAIH…CPQKPKPPWK (114 aa). Composition is skewed to polar residues over residues 201 to 212 and 236 to 245; these read HPASTAPQTNGP and GSVSGPTTPQ.

Belongs to the RITA family. In terms of assembly, interacts with RBPJ/RBPSUH.

It is found in the cytoplasm. The protein resides in the nucleus. Its subcellular location is the cytoskeleton. The protein localises to the microtubule organizing center. It localises to the centrosome. Its function is as follows. Tubulin-binding protein that acts as a negative regulator of Notch signaling pathway. Shuttles between the cytoplasm and the nucleus and mediates the nuclear export of RBPJ/RBPSUH, thereby preventing the interaction between RBPJ/RBPSUH and NICD product of Notch proteins (Notch intracellular domain), leading to down-regulate Notch-mediated transcription. May play a role in neurogenesis. This Rattus norvegicus (Rat) protein is RBPJ-interacting and tubulin-associated protein 1 (Rita1).